Reading from the N-terminus, the 324-residue chain is MFSFSEFYKLIAQHETLRPWLNTLPKQLSDWEEAEHGDMGRWIRALKKFPTDKPDIIDIKNEVSVRYEDGIANGEQKRLESLLRLLHPWRKGPYNMHGIHIDTEWRSDWKWDRVLPHISPLQGRSVLDVGCGNGYHMWRMLGEGAALTVGIDPSNLFLIQFEAIRRLMGDDNRAFLLPLGIEQLPELKAFDTVFSMGVLYHRRSPLDHIIQLKNQLRKDGEVILETLVIEGDENAVLVPTGRYAQMHNVYFFPSAKALKVWMEKCGFVDVRIVDESVTTTDEQRSTDWMTNNSLPEYLSPDDPTKTIEGYPAPKRAILVARNPD.

Residues Lys-91, Trp-105, Lys-110, Gly-130, 152 to 154 (DPS), 181 to 182 (IE), Met-196, Tyr-200, and Arg-315 contribute to the carboxy-S-adenosyl-L-methionine site.

This sequence belongs to the class I-like SAM-binding methyltransferase superfamily. CmoB family. As to quaternary structure, homotetramer.

It catalyses the reaction carboxy-S-adenosyl-L-methionine + 5-hydroxyuridine(34) in tRNA = 5-carboxymethoxyuridine(34) in tRNA + S-adenosyl-L-homocysteine + H(+). Its function is as follows. Catalyzes carboxymethyl transfer from carboxy-S-adenosyl-L-methionine (Cx-SAM) to 5-hydroxyuridine (ho5U) to form 5-carboxymethoxyuridine (cmo5U) at position 34 in tRNAs. The sequence is that of tRNA U34 carboxymethyltransferase from Photobacterium profundum (strain SS9).